A 422-amino-acid chain; its full sequence is NADP-dependent malic enzyme (422 aa).

Tyrosine 39 serves as the catalytic Proton donor. Lysine 94 functions as the Proton acceptor in the catalytic mechanism. Lysine 94 serves as a coordination point for substrate. A divalent metal cation-binding residues include glutamate 136, aspartate 137, and aspartate 162. Residues 195-198, asparagine 286, and asparagine 318 each bind NADP(+); that span reads AGAA. Asparagine 318 is a binding site for substrate.

This sequence belongs to the malic enzymes family. It depends on Mg(2+) as a cofactor. Mn(2+) is required as a cofactor.

It carries out the reaction (S)-malate + NADP(+) = pyruvate + CO2 + NADPH. It catalyses the reaction oxaloacetate + H(+) = pyruvate + CO2. The protein is NADP-dependent malic enzyme of Halomonas elongata (strain ATCC 33173 / DSM 2581 / NBRC 15536 / NCIMB 2198 / 1H9).